The following is a 664-amino-acid chain: MKRRNADCSKLRRPLKRNRITEGIYGSTFLYLKFLVVWALVLLADFVLEFRFEYLWPFWLFIRSVYDSFRYQGLAFSVFFVCVAFTSNIICLLFIPIQWLFFAASTYVWVQYVWHTERGVCLPTVSLWILFVYIEAAIRFKDLKNFHVDLCRPFAAHCIGYPVVTLGFGFKSYVSYKMRLRKQKEVQKENEFYMQLLQQALPPEQQMLQKQEKEAEEAAKGLPDMDSSILIHHNGGIPANKKLSTTLPEIEYREKGKEKDKDAKKHNLGINNNNILQPVDSKIQEIEYMENHINSKRLNNDLVGSTENLLKEDSCTASSKNYKNASGVVNSSPRSHSATNGSIPSSSSKNEKKQKCTSKSPSTHKDLMENCIPNNQLSKPDALVRLEQDIKKLKADLQASRQVEQELRSQISSLSSTERGIRSEMGQLRQENELLQNKLHNAVQMKQKDKHNISQLEKKLKAEQEARSFVEKQLMEEKKRKKLEEATAARAVAFAAASRGECTETLRNRIRELEAEGKKLTMDMKVKEDQIRELELKVQELRKYKENEKDTEVLMSALSAMQDKTQHLENSLSAETRIKLDLFSALGDAKRQLEIAQGQILQKDQEIKELKQKIAEVMAVMPSITYSAATSPLSPVSPHYSSKFVETSPSGLDPNASVYQPLKK.

A run of 4 helical transmembrane segments spans residues 28–48, 75–95, 120–140, and 154–174; these read TFLY…DFVL, AFSV…LLFI, VCLP…AIRF, and FAAH…KSYV. The span at 253–265 shows a compositional bias: basic and acidic residues; the sequence is REKGKEKDKDAKK. A disordered region spans residues 253 to 274; it reads REKGKEKDKDAKKHNLGINNNN. Ser-305 is modified (phosphoserine). The segment covering 320–348 has biased composition (polar residues); it reads KNYKNASGVVNSSPRSHSATNGSIPSSSS. The tract at residues 320–375 is disordered; that stretch reads KNYKNASGVVNSSPRSHSATNGSIPSSSSKNEKKQKCTSKSPSTHKDLMENCIPNN. Residue Asn-324 is glycosylated (N-linked (GlcNAc...) asparagine). Ser-332 carries the post-translational modification Phosphoserine. Asn-340 and Asn-452 each carry an N-linked (GlcNAc...) asparagine glycan. The disordered stretch occupies residues 630–664; that stretch reads TSPLSPVSPHYSSKFVETSPSGLDPNASVYQPLKK. Ser-631 and Ser-634 each carry phosphoserine. Asn-655 carries an N-linked (GlcNAc...) asparagine glycan.

The protein belongs to the macoilin family.

Its subcellular location is the rough endoplasmic reticulum membrane. The protein localises to the nucleus membrane. Functionally, plays a role in the regulation of neuronal activity. The polypeptide is Macoilin (MACO1) (Macaca mulatta (Rhesus macaque)).